The sequence spans 297 residues: Vesicular-fusion protein SEC17 (297 aa).

It belongs to the SNAP family.

It is found in the membrane. Its function is as follows. Required for vesicular transport between the endoplasmic reticulum and the Golgi apparatus. This chain is Vesicular-fusion protein SEC17 (SEC17), found in Komagataella phaffii (strain GS115 / ATCC 20864) (Yeast).